The sequence spans 59 residues: Large ribosomal subunit protein uL30 (59 aa).

The protein belongs to the universal ribosomal protein uL30 family. In terms of assembly, part of the 50S ribosomal subunit.

The protein is Large ribosomal subunit protein uL30 of Listeria innocua serovar 6a (strain ATCC BAA-680 / CLIP 11262).